The chain runs to 1094 residues: AP-3 complex subunit beta-1 (1094 aa).

The span at 1 to 11 (MSSNSFPYNEQ) shows a compositional bias: polar residues. Disordered regions lie at residues 1–31 (MSSNSFPYNEQSGGGEATELGQEATSTISPS) and 268–292 (DNGKNFYESDDDQKEKTDKKKKPYT). Residues S276 and S609 each carry the phosphoserine modification. A disordered region spans residues 662-811 (PAGKAKQENS…EKKTKQDRTP (150 aa)). The span at 666–677 (AKQENSAKKFYS) shows a compositional bias: basic and acidic residues. Acidic residues-rich tracts occupy residues 678 to 696 (ESEEEEDSSDSSSDSESES) and 705 to 726 (ESGEEGDSNEDSSEDSSSEQDS). 2 stretches are compositionally biased toward basic and acidic residues: residues 727-738 (ESGRESGLENKR) and 748-764 (GKSDSEDGEKENEKSKT). S750 and S752 each carry phosphoserine. Positions 765 to 777 (SDSSNDESSSIED) are enriched in low complexity. A compositionally biased stretch (acidic residues) spans 778 to 791 (SSSDSESESEPESE). Positions 792–811 (SESRRVTKEKEKKTKQDRTP) are enriched in basic and acidic residues.

This sequence belongs to the adaptor complexes large subunit family. In terms of assembly, adaptor protein complex 3 (AP-3) is a heterotetramer composed of two large adaptins (delta-type subunit AP3D1 and beta-type subunit AP3B1 or AP3B2), a medium adaptin (mu-type subunit AP3M1 or AP3M2) and a small adaptin (sigma-type subunit APS1 or AP3S2). AP-3 associates with the BLOC-1 complex. Interacts with KIF3A; interaction is direct; interaction is impaired by pyrophosphorylation of AP3B1. Post-translationally, phosphorylated on serine residues. Pyrophosphorylation by 5-diphosphoinositol pentakisphosphate (5-IP7) impairs interaction with KIF3A. Serine pyrophosphorylation is achieved by Mg(2+)-dependent, but enzyme independent transfer of a beta-phosphate from a inositol pyrophosphate to a pre-phosphorylated serine residue. As to expression, ubiquitously expressed.

Its subcellular location is the cytoplasmic vesicle. It is found in the clathrin-coated vesicle membrane. The protein resides in the golgi apparatus. Its function is as follows. Subunit of non-clathrin- and clathrin-associated adaptor protein complex 3 (AP-3) that plays a role in protein sorting in the late-Golgi/trans-Golgi network (TGN) and/or endosomes. The AP complexes mediate both the recruitment of clathrin to membranes and the recognition of sorting signals within the cytosolic tails of transmembrane cargo molecules. AP-3 appears to be involved in the sorting of a subset of transmembrane proteins targeted to lysosomes and lysosome-related organelles. In concert with the BLOC-1 complex, AP-3 is required to target cargos into vesicles assembled at cell bodies for delivery into neurites and nerve terminals. The chain is AP-3 complex subunit beta-1 (AP3B1) from Homo sapiens (Human).